A 403-amino-acid chain; its full sequence is Flavohemoprotein (403 aa).

The Globin domain occupies 1 to 138 (MLTPEQKAIV…LADLMIGIEK (138 aa)). Heme b is bound at residue His-85. Active-site charge relay system residues include Tyr-95 and Glu-137. The tract at residues 149–403 (GGWRDFRPFR…SQSFAPVILG (255 aa)) is reductase. Residues 152–257 (RDFRPFRVAR…HVPAGDFVLQ (106 aa)) enclose the FAD-binding FR-type domain. Residues Tyr-190 and 206 to 209 (RQYS) contribute to the FAD site. 269-274 (GVGITP) contributes to the NADP(+) binding site. FAD is bound at residue 390–393 (TFGP).

Belongs to the globin family. Two-domain flavohemoproteins subfamily. The protein in the C-terminal section; belongs to the flavoprotein pyridine nucleotide cytochrome reductase family. Heme b is required as a cofactor. It depends on FAD as a cofactor.

It catalyses the reaction 2 nitric oxide + NADPH + 2 O2 = 2 nitrate + NADP(+) + H(+). The enzyme catalyses 2 nitric oxide + NADH + 2 O2 = 2 nitrate + NAD(+) + H(+). This Deinococcus radiodurans (strain ATCC 13939 / DSM 20539 / JCM 16871 / CCUG 27074 / LMG 4051 / NBRC 15346 / NCIMB 9279 / VKM B-1422 / R1) protein is Flavohemoprotein.